Here is a 394-residue protein sequence, read N- to C-terminus: Elongation factor Tu 2 (394 aa).

The region spanning 10–204 (KPHVNVGTIG…ALDSYIPEPE (195 aa)) is the tr-type G domain. Residues 19–26 (GHVDHGKT) are G1. Position 19 to 26 (19 to 26 (GHVDHGKT)) interacts with GTP. Position 26 (Thr-26) interacts with Mg(2+). A G2 region spans residues 60–64 (GITIN). The tract at residues 81–84 (DCPG) is G3. GTP is bound by residues 81-85 (DCPGH) and 136-139 (NKCD). The segment at 136 to 139 (NKCD) is G4. Residues 174–176 (SAL) form a G5 region.

It belongs to the TRAFAC class translation factor GTPase superfamily. Classic translation factor GTPase family. EF-Tu/EF-1A subfamily. As to quaternary structure, monomer.

The protein resides in the cytoplasm. The enzyme catalyses GTP + H2O = GDP + phosphate + H(+). In terms of biological role, GTP hydrolase that promotes the GTP-dependent binding of aminoacyl-tRNA to the A-site of ribosomes during protein biosynthesis. This chain is Elongation factor Tu 2, found in Shewanella sp. (strain MR-4).